Reading from the N-terminus, the 166-residue chain is Calmodulin-like protein 5 (166 aa).

EF-hand domains are found at residues 11–46 (EQVA…LGQT), 47–82 (PTRE…KASR), 96–131 (AADE…LGEK), and 132–166 (LTDE…LSDQ). Residues aspartate 24, aspartate 26, aspartate 28, cysteine 30, glutamate 35, aspartate 60, aspartate 62, asparagine 64, threonine 66, glutamate 71, aspartate 109, aspartate 111, aspartate 113, and glutamate 120 each coordinate Ca(2+). An N6,N6,N6-trimethyllysine modification is found at lysine 131. The Ca(2+) site is built by aspartate 145, aspartate 147, aspartate 149, glutamine 151, and glutamate 156.

Belongs to the calmodulin family.

Its function is as follows. Potential calcium sensor. The sequence is that of Calmodulin-like protein 5 (CML5) from Oryza sativa subsp. japonica (Rice).